The chain runs to 433 residues: MKVQPAVQTNDNPRFVSTLTRNTLALILAGGRGTRLKNLTDWRAKPAVPFGGKFRIIDFTLSNCVNSGVRRIGVVTQYKAQSLIRHIQRGWSFLDGRFQEFIELLPAQQRTEEGTWYQGTADAVFQNLDILRTHNPGYVLILGGDHIYKMDYGRILAEHVERQADLTIACLEVPVEDASAFGVMAVDDSWRTTSFAEKPEHPAPIPGKPGHALISMGIYVFNAKFLYEQLIQDHDMDQSSHDFGKDVIPRLVASNARVYAHRFQNSCVNMASGVPYWRDVGTVDAYWKANIDLTTITPDLNLYDEDWPIWTHQEQLPPAKFVFDDDDRRGQALDSMVSGGCIISGATVRRSLLFSNVQIRGYSTIEDSVILPNVSIDRHAYLKRVVVEKECQIPEGLKVGFNPDEDRKHFYVTDDGITLITPEMLGQGIHYIR.

Alpha-D-glucose 1-phosphate is bound by residues Y117, G182, 197–198, and S215; that span reads EK.

It belongs to the bacterial/plant glucose-1-phosphate adenylyltransferase family. As to quaternary structure, homotetramer.

It carries out the reaction alpha-D-glucose 1-phosphate + ATP + H(+) = ADP-alpha-D-glucose + diphosphate. It functions in the pathway glycan biosynthesis; glycogen biosynthesis. Involved in the biosynthesis of ADP-glucose, a building block required for the elongation reactions to produce glycogen. Catalyzes the reaction between ATP and alpha-D-glucose 1-phosphate (G1P) to produce pyrophosphate and ADP-Glc. In Nitrosomonas europaea (strain ATCC 19718 / CIP 103999 / KCTC 2705 / NBRC 14298), this protein is Glucose-1-phosphate adenylyltransferase.